The sequence spans 85 residues: MSDEINETCKPQACAIQNCLMKNGYNESKCSYYIDELYKCCKKFYESNGSSASSVCCPKFNLLQLKLKQRELGQIDANLIDTKHG.

The CHCH domain maps to Asn-6 to Asn-48. Short sequence motifs (cx9C motif) lie at residues Cys-9–Cys-19 and Cys-30–Cys-40. 2 disulfides stabilise this stretch: Cys-9-Cys-40 and Cys-19-Cys-30.

The protein belongs to the CMC4 family.

It localises to the mitochondrion intermembrane space. This Candida tropicalis (strain ATCC MYA-3404 / T1) (Yeast) protein is Cx9C motif-containing protein 4, mitochondrial (CMC4).